The following is a 477-amino-acid chain: Pup--protein ligase (477 aa).

A Mg(2+)-binding site is contributed by E16. Residue R60 coordinates ATP. Y62 lines the Mg(2+) pocket. Residue D64 is the Proton acceptor of the active site. E70 contributes to the Mg(2+) binding site. T73 and W441 together coordinate ATP.

It belongs to the Pup ligase/Pup deamidase family. Pup-conjugating enzyme subfamily.

It catalyses the reaction ATP + [prokaryotic ubiquitin-like protein]-L-glutamate + [protein]-L-lysine = ADP + phosphate + N(6)-([prokaryotic ubiquitin-like protein]-gamma-L-glutamyl)-[protein]-L-lysine.. It participates in protein degradation; proteasomal Pup-dependent pathway. It functions in the pathway protein modification; protein pupylation. Functionally, catalyzes the covalent attachment of the prokaryotic ubiquitin-like protein modifier Pup to the proteasomal substrate proteins, thereby targeting them for proteasomal degradation. This tagging system is termed pupylation. The ligation reaction involves the side-chain carboxylate of the C-terminal glutamate of Pup and the side-chain amino group of a substrate lysine. This Corynebacterium kroppenstedtii (strain DSM 44385 / JCM 11950 / CIP 105744 / CCUG 35717) protein is Pup--protein ligase.